A 701-amino-acid polypeptide reads, in one-letter code: MSQEVLEDLAKVRNIGIMAHIDAGKTTTTERILFYTGITHKIGEVHDGAAAMDWMAQEQERGITITSAATTCFWGGNQINIIDTPGHVDFTVEVERSLRVLDGAVAVFDGKEGVEPQSETVWRQADKYKVPRICFVNKMDKIGADFHFTVKTVVDRLGATPLVIQLPIGSESTFEGVIDLVEMRALTWRGDAKGDVKMGAEYAVEPIPEDLKQQADEFRQKLIETVAENDEALLEKFFSGEEITVAELKSAIRRLTVSGSLYPILCGSSFKNRGVQPMLDAVVDYLPSPLDVPPVNGVDADNPQERLADVSQPFSALAFKVAVHPFFGRLTYIRVYSGTLPAGSQIVNSTKSRKERFGKVFQMHSNKENPVPKMSAGHIYAVIGLKYTTTGDTLCDQDNPIILESMTFPDPVIEVAIEPKTKADQEKLSLAIQRLAEEDPTFKTEQNPETGQTVIKGMGELHLDILVDRMRREFNVEANVGTPQVAYRETIRRTVEKHEYTHKKQTGGAGQFARVIITLEPLEVTGEKTYDFVDTVTGGRIPKEYIPSVDAGIRDAMQVGVLAGYPTVGIKATLVDGAYHDVDSSEMAFRIAGSQAFKEASRRADPTLLEPIMSVEVRTPDEYMGDVIGDLNSRRGHIQSMQDSSGIKVIQARVPLSEMFGYIGDLRSKTSGRAVYSMTFDGYAEAPKSVTEEVVRKARGE.

One can recognise a tr-type G domain in the interval 10–290; sequence AKVRNIGIMA…AVVDYLPSPL (281 aa). GTP contacts are provided by residues 19-26, 83-87, and 137-140; these read AHIDAGKT, DTPGH, and NKMD.

The protein belongs to the TRAFAC class translation factor GTPase superfamily. Classic translation factor GTPase family. EF-G/EF-2 subfamily.

It is found in the cytoplasm. In terms of biological role, catalyzes the GTP-dependent ribosomal translocation step during translation elongation. During this step, the ribosome changes from the pre-translocational (PRE) to the post-translocational (POST) state as the newly formed A-site-bound peptidyl-tRNA and P-site-bound deacylated tRNA move to the P and E sites, respectively. Catalyzes the coordinated movement of the two tRNA molecules, the mRNA and conformational changes in the ribosome. This is Elongation factor G from Tropheryma whipplei (strain TW08/27) (Whipple's bacillus).